Here is a 122-residue protein sequence, read N- to C-terminus: LYR motif-containing protein 1 (122 aa).

The protein belongs to the complex I LYR family.

Its function is as follows. May promote cell proliferation and inhibition of apoptosis of preadipocytes. The sequence is that of LYR motif-containing protein 1 (Lyrm1) from Mus musculus (Mouse).